The following is a 405-amino-acid chain: MAAEMALVKPITPKFINPMRTFSSSSKFSTIKMSATSQSNTTTTATKPSKKGNKKEINETLLTPRFYTTDFDEMETLFNTEINKKLNQSEFEALLQEFKTDYNQTHFVRNKEFKEAADKMQGPLRQIFVEFLERSCTAEFSGFLLYKELGRRLKKTNPVVAEIFSLMSRDEARHAGFLNKGLSDFNYALDLGFLTKARKYTFFKPKFIFYATYLSEKIGYWRYITIYRHLKENPEYQCYPIFKYFENWCQDENRHGDFFSALMKAQPQFLNDWKAKLWARFFCLSVYVTMYLNDCQRTAFYEGIGLDTKEFDMHVIIETNRTTARIFPAVLDVENPEFKRKLDRMVVINQKLQAVGETEDNSVVKNLKRVPLIAALVSEILAAYLMPPIESGSVDFAEFEPKLVY.

The N-terminal 44 residues, 1–44 (MAAEMALVKPITPKFINPMRTFSSSSKFSTIKMSATSQSNTTTT), are a transit peptide targeting the chloroplast. Residues 33-47 (MSATSQSNTTTTATK) show a composition bias toward low complexity. A disordered region spans residues 33–54 (MSATSQSNTTTTATKPSKKGNK).

It belongs to the AcsF family. Fe cation is required as a cofactor.

It localises to the plastid. It is found in the chloroplast. It catalyses the reaction Mg-protoporphyrin IX 13-monomethyl ester + 3 NADPH + 3 O2 + 2 H(+) = 3,8-divinyl protochlorophyllide a + 3 NADP(+) + 5 H2O. It participates in porphyrin-containing compound metabolism; chlorophyll biosynthesis. In terms of biological role, catalyzes the formation of the isocyclic ring in chlorophyll biosynthesis. Mediates the cyclase reaction, which results in the formation of divinylprotochlorophyllide (Pchlide) characteristic of all chlorophylls from magnesium-protoporphyrin IX 13-monomethyl ester (MgPMME). The protein is Magnesium-protoporphyrin IX monomethyl ester [oxidative] cyclase, chloroplastic (CRD1) of Euphorbia esula (Leafy spurge).